We begin with the raw amino-acid sequence, 418 residues long: Beta-2 adrenergic receptor (418 aa).

Topologically, residues 1 to 34 are extracellular; it reads MGQPGNRSVFLLAPNGSHAPDQDVPQERDEAWVV. N-linked (GlcNAc...) asparagine glycans are attached at residues Asn-6 and Asn-15. A helical transmembrane segment spans residues 35-58; it reads GMAIVMSLIVLAIVFGNVLVITAI. Over 59-71 the chain is Cytoplasmic; that stretch reads AKFERLQTVTNYF. A helical transmembrane segment spans residues 72-95; it reads ITSLACADLVMGLAVVPFGASHIL. At 96–106 the chain is on the extracellular side; it reads MKMWTFGSFWC. Intrachain disulfides connect Cys-106-Cys-191 and Cys-184-Cys-190. Residues 107-129 traverse the membrane as a helical segment; that stretch reads EFWISIDVLCVTASIETLCVIAV. The Cytoplasmic segment spans residues 130-150; it reads DRYLAITSPFKYQCLLTKNKA. Tyr-141 carries the phosphotyrosine modification. Residues 151–174 form a helical membrane-spanning segment; that stretch reads RVVILMVWVVSGLISFLPIKMHWY. Topologically, residues 175-196 are extracellular; that stretch reads QATHREALNCYAEEACCDFFTN. The helical transmembrane segment at 197–220 threads the bilayer; sequence QPYAIASSIVSFYLPLVVMVFVYS. Residues 221-274 lie on the Cytoplasmic side of the membrane; sequence RVFQVARRQLQKIDKSEGRFHAQNLSQAEQDGRSGPGHRRSSKFCLKEHKALKT. Ser-246 bears the Phosphoserine mark. Phosphoserine; by PKA is present on residues Ser-261 and Ser-262. Cys-265 carries the S-palmitoyl cysteine lipid modification. A helical transmembrane segment spans residues 275-298; sequence LGIIMGTFTLCWLPFFIVNIVHGI. Residues 299 to 305 are Extracellular-facing; sequence HDNLIPK. The chain crosses the membrane as a helical span at residues 306-329; the sequence is EVYILLNWVGYVNSAFNPLIYCRS. Over 330–418 the chain is Cytoplasmic; that stretch reads PDFRMAFQEL…RNCSTNDSML (89 aa). The S-palmitoyl cysteine moiety is linked to residue Cys-341. Ser-345 and Ser-346 each carry phosphoserine; by PKA. Phosphoserine; by BARK is present on residues Ser-355 and Ser-356. A disordered region spans residues 381–418; that stretch reads RLCEDAPGPEGCAHRQGTVPDDSTDSQGRNCSTNDSML. 4-hydroxyproline is present on residues Pro-387 and Pro-400. Residues 405 to 418 are compositionally biased toward polar residues; it reads DSQGRNCSTNDSML. The short motif at 415 to 418 is the PDZ-binding element; the sequence is DSML.

The protein belongs to the G-protein coupled receptor 1 family. Adrenergic receptor subfamily. ADRB2 sub-subfamily. Binds NHERF1 and GPRASP1. Interacts with ARRB1 and ARRB2. Interacts with SRC. Interacts with USP20 and USP33. Interacts with VHL; the interaction, which is increased on hydroxylation of ADRB2, ubiquitinates ADRB2 leading to its degradation. Interacts with EGLN3; the interaction hydroxylates ADRB2 facilitating VHL-E3 ligase-mediated ubiquitination. Interacts (via PDZ-binding motif) with SNX27 (via PDZ domain); the interaction is required when endocytosed to prevent degradation in lysosomes and promote recycling to the plasma membrane. Interacts with CNIH4. Interacts with ARRDC3. Interacts with NEDD4. Interacts with MARCHF2. Post-translationally, palmitoylated; may reduce accessibility of Ser-345 and Ser-346 by anchoring Cys-341 to the plasma membrane. Agonist stimulation promotes depalmitoylation and further allows Ser-345 and Ser-346 phosphorylation. In terms of processing, phosphorylated by PKA and BARK upon agonist stimulation, which mediates homologous desensitization of the receptor. PKA-mediated phosphorylation seems to facilitate phosphorylation by BARK. Phosphorylation of Tyr-141 is induced by insulin and leads to supersensitization of the receptor. Post-translationally, polyubiquitinated. Agonist-induced ubiquitination leads to sort internalized receptors to the lysosomes for degradation. Deubiquitination by USP20 and USP33, leads to ADRB2 recycling and resensitization after prolonged agonist stimulation. USP20 and USP33 are constitutively associated and are dissociated immediately after agonist stimulation. Ubiquitination by the VHL-E3 ligase complex is oxygen-dependent. In terms of processing, hydroxylation by EGLN3 occurs only under normoxia and increases the interaction with VHL and the subsequent ubiquitination and degradation of ADRB2. Palmitoylated. Mainly palmitoylated at Cys-341. Palmitoylation may reduce accessibility of phosphorylation sites by anchoring the receptor to the plasma membrane. Agonist stimulation promotes depalmitoylation and further allows Ser-345 and Ser-346 phosphorylation. Also undergoes transient, ligand-induced palmitoylation at Cys-265 probably by ZDHHC9, ZDHHC14 and ZDHHC18 within the Golgi. Palmitoylation at Cys-265 requires phosphorylation by PKA and receptor internalization and stabilizes the receptor. Could be depalmitoylated by LYPLA1 at the plasma membrane. Expressed in heart, liver, lung, skeletal muscle and subcutaneous adipose tissue.

The protein resides in the cell membrane. It is found in the early endosome. Its subcellular location is the golgi apparatus. In terms of biological role, beta-adrenergic receptors mediate the catecholamine-induced activation of adenylate cyclase through the action of G proteins. The beta-2-adrenergic receptor binds epinephrine with an approximately 30-fold greater affinity than it does norepinephrine. The chain is Beta-2 adrenergic receptor (ADRB2) from Sus scrofa (Pig).